We begin with the raw amino-acid sequence, 295 residues long: Cell shape-determining protein MreC (295 aa).

The N-terminal stretch at 1-34 (MPQFFLNKRLIILLISIIVLVALVGFSLRDRENA) is a signal peptide. Positions 66 to 112 (VVDLKNTYTENQHLKERLEELAQLESEVADLKKENKDLKESLDITDS) form a coiled coil. Residues 276–295 (SAEAGTTDDDTTSSDTTGGQ) form a disordered region.

The protein belongs to the MreC family. In terms of assembly, homooligomer of 24 subunits, arranged as 12 dimers.

Involved in formation and maintenance of cell shape. The chain is Cell shape-determining protein MreC from Listeria monocytogenes serovar 1/2a (strain ATCC BAA-679 / EGD-e).